The sequence spans 312 residues: Olfactory receptor 1D5 (312 aa).

Residues methionine 1–glutamine 25 are Extracellular-facing. A glycan (N-linked (GlcNAc...) asparagine) is linked at asparagine 5. The chain crosses the membrane as a helical span at residues isoleucine 26–isoleucine 49. The Cytoplasmic portion of the chain corresponds to serine 50–threonine 57. The chain crosses the membrane as a helical span at residues proline 58 to proline 79. At lysine 80–glutamine 100 the chain is on the extracellular side. An intrachain disulfide couples cysteine 97 to cysteine 189. A helical transmembrane segment spans residues leucine 101–tyrosine 120. Over aspartate 121 to leucine 140 the chain is Cytoplasmic. The helical transmembrane segment at cysteine 141 to leucine 158 threads the bilayer. The Extracellular segment spans residues leucine 159–histidine 196. Residues threonine 197–arginine 220 traverse the membrane as a helical segment. At isoleucine 221–alanine 237 the chain is on the cytoplasmic side. The helical transmembrane segment at phenylalanine 238–leucine 260 threads the bilayer. Over glutamine 261–serine 271 the chain is Extracellular. A helical membrane pass occupies residues valine 272–leucine 291. Residues arginine 292–lysine 312 lie on the Cytoplasmic side of the membrane.

It belongs to the G-protein coupled receptor 1 family.

The protein resides in the cell membrane. Functionally, odorant receptor. This chain is Olfactory receptor 1D5 (OR1D5), found in Pan troglodytes (Chimpanzee).